The following is a 94-amino-acid chain: Protein RESPONSE TO LOW SULFUR 2 (94 aa).

Residues 15-63 adopt a coiled-coil conformation; that stretch reads VDELRRKNGEMEKAVEEMKKEMLQLWRRTQVAEEAEERLCSQLAELEAE.

Functionally, may be involved in defense responses monitoring. Probably implicated into osmotic stress signaling. The chain is Protein RESPONSE TO LOW SULFUR 2 from Arabidopsis thaliana (Mouse-ear cress).